The sequence spans 278 residues: Sulfur carrier protein FdhD (278 aa).

Cysteine 117 acts as the Cysteine persulfide intermediate in catalysis.

It belongs to the FdhD family.

The protein resides in the cytoplasm. Functionally, required for formate dehydrogenase (FDH) activity. Acts as a sulfur carrier protein that transfers sulfur from IscS to the molybdenum cofactor prior to its insertion into FDH. This is Sulfur carrier protein FdhD from Variovorax paradoxus (strain S110).